The sequence spans 72 residues: Large ribosomal subunit protein bL28 (72 aa).

It belongs to the bacterial ribosomal protein bL28 family.

In Chlorobium chlorochromatii (strain CaD3), this protein is Large ribosomal subunit protein bL28.